We begin with the raw amino-acid sequence, 341 residues long: Protein-glutamate methylesterase/protein-glutamine glutaminase 2 (341 aa).

A Response regulatory domain is found at 11-126; it reads RVLVADDSEL…DLGEYGRLIR (116 aa). Residue aspartate 62 is modified to 4-aspartylphosphate. The CheB-type methylesterase domain maps to 152–341; that stretch reads PARAARVEVV…IPRALRELTR (190 aa). Active-site residues include serine 166, histidine 193, and aspartate 285.

Belongs to the CheB family. In terms of processing, phosphorylated by CheA. Phosphorylation of the N-terminal regulatory domain activates the methylesterase activity.

The protein resides in the cytoplasm. It carries out the reaction [protein]-L-glutamate 5-O-methyl ester + H2O = L-glutamyl-[protein] + methanol + H(+). The enzyme catalyses L-glutaminyl-[protein] + H2O = L-glutamyl-[protein] + NH4(+). In terms of biological role, involved in chemotaxis. Part of a chemotaxis signal transduction system that modulates chemotaxis in response to various stimuli. Catalyzes the demethylation of specific methylglutamate residues introduced into the chemoreceptors (methyl-accepting chemotaxis proteins or MCP) by CheR. Also mediates the irreversible deamidation of specific glutamine residues to glutamic acid. In Anaeromyxobacter dehalogenans (strain 2CP-C), this protein is Protein-glutamate methylesterase/protein-glutamine glutaminase 2.